We begin with the raw amino-acid sequence, 405 residues long: Replication factor C large subunit (405 aa).

47 to 54 (GPPGVGKT) lines the ATP pocket.

This sequence belongs to the activator 1 small subunits family. RfcL subfamily. Heteromultimer composed of small subunits (RfcS) and large subunits (RfcL).

Functionally, part of the RFC clamp loader complex which loads the PCNA sliding clamp onto DNA. This is Replication factor C large subunit from Saccharolobus islandicus (strain Y.N.15.51 / Yellowstone #2) (Sulfolobus islandicus).